A 354-amino-acid polypeptide reads, in one-letter code: Inactive ADP-ribosyltransferase ARH2 (354 aa).

Ser-27 bears the Phosphoserine mark.

Belongs to the ADP-ribosylglycohydrolase family.

It localises to the cytoplasm. Its subcellular location is the myofibril. It is found in the sarcomere. In terms of biological role, required for myofibril assembly and outgrowth of the cardiac chambers in the developing heart. Appears to be catalytically inactive, showing no activity against O-acetyl-ADP-ribose. This is Inactive ADP-ribosyltransferase ARH2 (ADPRHL1) from Homo sapiens (Human).